The sequence spans 321 residues: Torsin-2A (321 aa).

An N-terminal signal peptide occupies residues 1–26; that stretch reads MAAATRSCRPWGSLLGLIWLVSAAAA. 93–100 lines the ATP pocket; sequence GWTGTGKS. N-linked (GlcNAc...) asparagine glycosylation is present at Asn-149.

Belongs to the ClpA/ClpB family. Torsin subfamily. Homohexamer. Interacts with TOR1AIP1.

The protein resides in the endoplasmic reticulum lumen. This chain is Torsin-2A (TOR2A), found in Bos taurus (Bovine).